The primary structure comprises 293 residues: Diaminopimelate epimerase (293 aa).

Substrate-binding residues include Asn-17, Gln-47, and Asn-67. The Proton donor role is filled by Cys-76. Substrate contacts are provided by residues 77-78 (GN), Asn-164, Asn-197, and 215-216 (ER). Cys-224 serves as the catalytic Proton acceptor. 225 to 226 (GS) provides a ligand contact to substrate.

The protein belongs to the diaminopimelate epimerase family. As to quaternary structure, homodimer.

It localises to the cytoplasm. The catalysed reaction is (2S,6S)-2,6-diaminopimelate = meso-2,6-diaminopimelate. The protein operates within amino-acid biosynthesis; L-lysine biosynthesis via DAP pathway; DL-2,6-diaminopimelate from LL-2,6-diaminopimelate: step 1/1. Functionally, catalyzes the stereoinversion of LL-2,6-diaminopimelate (L,L-DAP) to meso-diaminopimelate (meso-DAP), a precursor of L-lysine and an essential component of the bacterial peptidoglycan. This Rhodopseudomonas palustris (strain BisB5) protein is Diaminopimelate epimerase.